The following is a 133-amino-acid chain: Thioredoxin H2 (133 aa).

The interval 1–22 (MGGALSTVFGSGEDATAAGTES) is disordered. A Thioredoxin domain is found at 6–133 (STVFGSGEDA…LEKKVSKLRA (128 aa)). Residues C59 and C62 each act as nucleophile in the active site. A disulfide bridge links C59 with C62.

It belongs to the thioredoxin family. Plant H-type subfamily. Interacts with MDH1.

The protein localises to the cytoplasm. The protein resides in the mitochondrion. Functionally, thiol-disulfide oxidoreductase probably involved in the redox regulation of a number of cytosolic enzymes. Possesses insulin disulfide bonds reducing activity. This Arabidopsis thaliana (Mouse-ear cress) protein is Thioredoxin H2 (TRX2).